The primary structure comprises 120 residues: Large ribosomal subunit protein uL18 (120 aa).

Over residues 1–10 (MKLTRRESKE) the composition is skewed to basic and acidic residues. The segment at 1–26 (MKLTRRESKERRHRRVRGKVQGSPER) is disordered.

This sequence belongs to the universal ribosomal protein uL18 family. As to quaternary structure, part of the 50S ribosomal subunit; part of the 5S rRNA/L5/L18/L25 subcomplex. Contacts the 5S and 23S rRNAs.

Its function is as follows. This is one of the proteins that bind and probably mediate the attachment of the 5S RNA into the large ribosomal subunit, where it forms part of the central protuberance. The sequence is that of Large ribosomal subunit protein uL18 from Nostoc sp. (strain PCC 7120 / SAG 25.82 / UTEX 2576).